Consider the following 324-residue polypeptide: Probable UDP-sugar transporter protein SLC35A4 (324 aa).

Over M1–R18 the chain is Cytoplasmic. The helical transmembrane segment at W19–L39 threads the bilayer. Topologically, residues C40–S52 are lumenal. Residues A53–W73 traverse the membrane as a helical segment. Topologically, residues Q74–Q85 are cytoplasmic. Residues A86 to L106 form a helical membrane-spanning segment. Residues Q107–R141 lie on the Lumenal side of the membrane. Residues Q142–Q162 form a helical membrane-spanning segment. Over D163–M180 the chain is Cytoplasmic. Residues P181–L201 traverse the membrane as a helical segment. Topologically, residues S202–R214 are lumenal. Residues L215–L235 traverse the membrane as a helical segment. Residues H236 to G248 lie on the Cytoplasmic side of the membrane. Residues F249–M271 form a helical membrane-spanning segment. Topologically, residues K272–S275 are lumenal. Residues S276–L298 form a helical membrane-spanning segment. At R299–R324 the chain is on the cytoplasmic side.

Belongs to the nucleotide-sugar transporter family. SLC35A subfamily. Found in a complex with SLC35A2 and SLC35A3.

It localises to the golgi apparatus membrane. It catalyses the reaction CDP-L-ribitol(in) + CDP(out) = CDP-L-ribitol(out) + CDP(in). In terms of biological role, mediates the transport of CDP-ribitol. Does not exhibit CMP-sialic acid, UDP-galactose and UDP-N-acetylglucosamine transport activity. The sequence is that of Probable UDP-sugar transporter protein SLC35A4 from Bos taurus (Bovine).